Consider the following 304-residue polypeptide: GTPase Era (304 aa).

The region spanning 11-179 is the Era-type G domain; sequence YCGFIAIVGR…QKIVRKSLRE (169 aa). Residues 19-26 are G1; the sequence is GRPNVGKS. 19-26 provides a ligand contact to GTP; it reads GRPNVGKS. Positions 45-49 are G2; the sequence is QTTRH. Residues 66 to 69 are G3; that stretch reads DTPG. GTP contacts are provided by residues 66 to 70 and 128 to 131; these read DTPGL and NKVD. The G4 stretch occupies residues 128–131; it reads NKVD. Positions 158–160 are G5; that stretch reads ISA. Residues 210–287 form the KH type-2 domain; it reads TGEELPYSVT…HLELWVKVKA (78 aa).

This sequence belongs to the TRAFAC class TrmE-Era-EngA-EngB-Septin-like GTPase superfamily. Era GTPase family. In terms of assembly, monomer.

It localises to the cytoplasm. The protein localises to the cell inner membrane. Its function is as follows. An essential GTPase that binds both GDP and GTP, with rapid nucleotide exchange. Plays a role in 16S rRNA processing and 30S ribosomal subunit biogenesis and possibly also in cell cycle regulation and energy metabolism. The chain is GTPase Era from Haemophilus ducreyi (strain 35000HP / ATCC 700724).